The following is a 397-amino-acid chain: Purine ribonucleoside efflux pump NepI (397 aa).

Residues 1–21 (MNENIAEKFRADGVARPNWSA) lie on the Cytoplasmic side of the membrane. Residues 22-42 (VFAVAFCVACLITVEFLPVSL) form a helical membrane-spanning segment. Residues 43 to 54 (LTPMAQDLGISE) are Periplasmic-facing. The chain crosses the membrane as a helical span at residues 55–75 (GVAGQSVTVTAFVAMFSSLFI). The Cytoplasmic segment spans residues 76–85 (TQIIQATDRR). A helical transmembrane segment spans residues 86–106 (YIVILFAVLLTASCLMVSFAN). Residue Ser107 is a topological domain, periplasmic. Residues 108–128 (FTLLLLGRACLGLALGGFWAM) form a helical membrane-spanning segment. Over 129 to 147 (SASLTMRLVPARTVPKALS) the chain is Cytoplasmic. Residues 148–168 (VIFGAVSIALVIAAPLGSFLG) traverse the membrane as a helical segment. Residues 169-175 (GIIGWRN) are Periplasmic-facing. A helical membrane pass occupies residues 176-196 (VFNAAAVMGVLCVIWVVKSLP). At 197-215 (SLPGEPSHQKQNMFSLLQR) the chain is on the cytoplasmic side. The helical transmembrane segment at 216–236 (PGVMAGMIAIFMSFAGQFAFF) threads the bilayer. At 237–255 (TYIRPVYMNLAGFDVDGLT) the chain is on the periplasmic side. A helical membrane pass occupies residues 256–276 (LVLLSFGIASFVGTSFSSYVL). Over 277 to 281 (KRSVK) the chain is Cytoplasmic. Residues 282–302 (LALAGAPLLLALSALTLIVWG) traverse the membrane as a helical segment. Over 303-305 (SDK) the chain is Periplasmic. Residues 306–326 (TVAAAIAIIWGLAFALVPVGW) traverse the membrane as a helical segment. Residues 327-343 (STWITRSLADQAEKAGS) are Cytoplasmic-facing. Residues 344–364 (IQVAVIQLANTCGAAVGGYAL) form a helical membrane-spanning segment. The Periplasmic segment spans residues 365–366 (DN). Residues 367–387 (FGLLSPLALSGGLMLLTALVV) form a helical membrane-spanning segment. Topologically, residues 388–397 (AAKVRITPMS) are cytoplasmic.

Belongs to the major facilitator superfamily. DHA1 family. NepI (TC 2.A.1.2.26) subfamily.

It is found in the cell inner membrane. The catalysed reaction is inosine(in) + H(+)(out) = inosine(out) + H(+)(in). The enzyme catalyses guanosine(in) + H(+)(out) = guanosine(out) + H(+)(in). Its function is as follows. Involved in the efflux of purine ribonucleosides, such as inosine and guanosine. The polypeptide is Purine ribonucleoside efflux pump NepI (Salmonella choleraesuis (strain SC-B67)).